A 181-amino-acid polypeptide reads, in one-letter code: Prepronociceptin (181 aa).

An N-terminal signal peptide occupies residues methionine 1–serine 19. Positions serine 20–leucine 95 are excised as a propeptide. Residues serine 103–glutamate 125 form a disordered region. 2 consecutive repeat copies span residues aspartate 109–alanine 114 and aspartate 115–alanine 120. Residues aspartate 109–alanine 120 form a 2 X 6 AA tandem repeats of D-A-E-P-X-A region. The segment covering proline 112 to glutamate 125 has biased composition (acidic residues). Residues threonine 174 to valine 181 constitute a propeptide that is removed on maturation.

Belongs to the opioid neuropeptide precursor family. In terms of processing, specific enzymatic cleavages at paired basic residues probably yield other active peptides besides nociceptin. The N-terminal domain contains 6 conserved cysteines thought to be involved in disulfide bonding and/or processing. As to expression, expressed predominantly in the spinal cord and brain, being more abundant in the hypothalamus and striatum. Also found in small amounts in ovary.

It localises to the secreted. Functionally, ligand of the opioid receptor-like receptor OPRL1. It may act as a transmitter in the brain by modulating nociceptive and locomotor behavior. May be involved in neuronal differentiation and development. In terms of biological role, blocks nociceptin action in pain transmission by inhibiting nociceptin-induced hyperalgesia and allodynia. Its function is as follows. Has potent analgesic activity. The polypeptide is Prepronociceptin (Pnoc) (Rattus norvegicus (Rat)).